We begin with the raw amino-acid sequence, 455 residues long: Bifunctional protein GlmU (455 aa).

The tract at residues 1-226 (MALNVVILAA…AIEVEGANNR (226 aa)) is pyrophosphorylase. UDP-N-acetyl-alpha-D-glucosamine contacts are provided by residues 8–11 (LAAG), K22, Q73, 78–79 (GT), 100–102 (YGD), G137, E151, N166, and N224. D102 contributes to the Mg(2+) binding site. Residue N224 coordinates Mg(2+). The segment at 227–247 (VQLAQLERAYQARAAEKLMLE) is linker. The segment at 248–455 (GANLRDPARL…WARPVKKPKS (208 aa)) is N-acetyltransferase. Residues R330 and K348 each contribute to the UDP-N-acetyl-alpha-D-glucosamine site. H360 functions as the Proton acceptor in the catalytic mechanism. Residues Y363 and N374 each contribute to the UDP-N-acetyl-alpha-D-glucosamine site. Acetyl-CoA contacts are provided by residues A377, 383–384 (NY), S402, A420, and R437.

It in the N-terminal section; belongs to the N-acetylglucosamine-1-phosphate uridyltransferase family. The protein in the C-terminal section; belongs to the transferase hexapeptide repeat family. Homotrimer. Requires Mg(2+) as cofactor.

Its subcellular location is the cytoplasm. It catalyses the reaction alpha-D-glucosamine 1-phosphate + acetyl-CoA = N-acetyl-alpha-D-glucosamine 1-phosphate + CoA + H(+). It carries out the reaction N-acetyl-alpha-D-glucosamine 1-phosphate + UTP + H(+) = UDP-N-acetyl-alpha-D-glucosamine + diphosphate. The protein operates within nucleotide-sugar biosynthesis; UDP-N-acetyl-alpha-D-glucosamine biosynthesis; N-acetyl-alpha-D-glucosamine 1-phosphate from alpha-D-glucosamine 6-phosphate (route II): step 2/2. It functions in the pathway nucleotide-sugar biosynthesis; UDP-N-acetyl-alpha-D-glucosamine biosynthesis; UDP-N-acetyl-alpha-D-glucosamine from N-acetyl-alpha-D-glucosamine 1-phosphate: step 1/1. It participates in bacterial outer membrane biogenesis; LPS lipid A biosynthesis. Functionally, catalyzes the last two sequential reactions in the de novo biosynthetic pathway for UDP-N-acetylglucosamine (UDP-GlcNAc). The C-terminal domain catalyzes the transfer of acetyl group from acetyl coenzyme A to glucosamine-1-phosphate (GlcN-1-P) to produce N-acetylglucosamine-1-phosphate (GlcNAc-1-P), which is converted into UDP-GlcNAc by the transfer of uridine 5-monophosphate (from uridine 5-triphosphate), a reaction catalyzed by the N-terminal domain. This is Bifunctional protein GlmU from Shewanella sediminis (strain HAW-EB3).